The sequence spans 134 residues: Methylglyoxal synthase (134 aa).

Positions 1–134 (MHIALIAHDE…DWRDLRRNDE (134 aa)) constitute an MGS-like domain. Residues H8, K12, 34 to 37 (TGTT), and 54 to 55 (SG) contribute to the substrate site. The Proton donor/acceptor role is filled by D60. H87 provides a ligand contact to substrate.

The protein belongs to the methylglyoxal synthase family.

The enzyme catalyses dihydroxyacetone phosphate = methylglyoxal + phosphate. In terms of biological role, catalyzes the formation of methylglyoxal from dihydroxyacetone phosphate. This chain is Methylglyoxal synthase, found in Listeria innocua serovar 6a (strain ATCC BAA-680 / CLIP 11262).